The primary structure comprises 330 residues: Protein TIFY 11f (330 aa).

The Tify 1 domain maps to 61–97; the sequence is EAAAAAQLKIMYGGRMLVFDDFFPAGGAVVELVRAAA. The Jas signature appears at 124–142; that stretch reads PVVRKVSLQRFVEKRRRMR. The Nuclear localization signal motif lies at 126-133; the sequence is VRKVSLQR. The region spanning 228-264 is the Tify 2 domain; that stretch reads EAAAAAQLKIMYGGRMLVFDDFFPAGGAVVELVRAAA. The tract at residues 267 to 330 is disordered; it reads GRDDDGARAR…SGRTDDAAFY (64 aa).

The protein belongs to the TIFY/JAZ family. In terms of processing, ubiquitinated. Targeted for degradation by the SCF(COI1) E3 ubiquitin ligase-proteasome pathway during jasmonate signaling.

It localises to the nucleus. In terms of biological role, repressor of jasmonate responses. In Oryza sativa subsp. japonica (Rice), this protein is Protein TIFY 11f.